The primary structure comprises 104 residues: Large ribosomal subunit protein bL21 (104 aa).

Belongs to the bacterial ribosomal protein bL21 family. As to quaternary structure, part of the 50S ribosomal subunit. Contacts protein L20.

Functionally, this protein binds to 23S rRNA in the presence of protein L20. The protein is Large ribosomal subunit protein bL21 of Pseudomonas entomophila (strain L48).